The following is a 310-amino-acid chain: Solute carrier family 25 member 47 (310 aa).

3 Solcar repeats span residues 1–80 (MDFV…CLAH), 93–208 (PTKA…LSEW), and 217–304 (PDVL…VLRL). Helical transmembrane passes span 3 to 23 (FVAG…LDTV), 49 to 69 (LWGF…VSSV), 98 to 116 (ITLS…TSPT), 192 to 212 (GHSF…LTPA), 219 to 239 (VLGV…VATP), and 275 to 295 (VLFK…MVVF).

Belongs to the mitochondrial carrier (TC 2.A.29) family.

It localises to the mitochondrion inner membrane. It is found in the mitochondrion outer membrane. It catalyses the reaction NAD(+)(in) = NAD(+)(out). The catalysed reaction is acetyl-CoA(in) = acetyl-CoA(out). In terms of biological role, mitochondrial NAD(+) transporter that acts as a 'metabolic gate' in hepatic lipogenesis. Provides NAD(+) substrate to mitochondrial SIRT3 deacetylase and enables its NAD(+)-dependent activities in mitochondrial energy metabolism. This triggers downstream activation of PRKAA1/AMPK-alpha signaling cascade that negatively regulates sterol regulatory element-binding protein (SREBP) transcriptional activities and ATP-consuming lipogenesis to restore cellular energy balance. May transport other mitochondrial metabolites having an aromatic nucleotide and phosphate groups, such as acetyl-CoA. Does not transport amino acids. The transport mechanism remains to be elucidated. This is Solute carrier family 25 member 47 from Rattus norvegicus (Rat).